The chain runs to 220 residues: Fructose-6-phosphate aldolase (220 aa).

Lys85 (schiff-base intermediate with substrate) is an active-site residue.

This sequence belongs to the transaldolase family. Type 3A subfamily. Homodecamer.

It is found in the cytoplasm. The catalysed reaction is beta-D-fructose 6-phosphate = dihydroxyacetone + D-glyceraldehyde 3-phosphate. In terms of biological role, catalyzes the reversible formation of fructose 6-phosphate from dihydroxyacetone and D-glyceraldehyde 3-phosphate via an aldolization reaction. The protein is Fructose-6-phosphate aldolase of Salmonella schwarzengrund (strain CVM19633).